The following is a 416-amino-acid chain: Calreticulin (416 aa).

A signal peptide spans 1-25 (MENRGRNPSFLSLLLLLSLFAIASA). Asn-57 carries N-linked (GlcNAc...) asparagine glycosylation. A disulfide bond links Cys-111 and Cys-143. Positions 115, 117, 134, and 141 each coordinate an alpha-D-glucoside. N-linked (GlcNAc...) asparagine glycosylation is present at Asn-157. 7 repeat units span residues 197-208 (KQTGSLYTDWDL), 216-227 (DPEAKKPEDWDD), 233-244 (DPEDKKPEGYDD), 251-262 (DPEAKKPEDWDD), 266-276 (GEWTAPTIPNP), 280-290 (GPWKAKKIKNP), and 294-304 (GKWKAPMIDNP). The segment at 197 to 262 (KQTGSLYTDW…EAKKPEDWDD (66 aa)) is 4 X approximate repeats. Residues 217–241 (PEAKKPEDWDDKEFIPDPEDKKPEG) show a composition bias toward basic and acidic residues. A disordered region spans residues 217 to 281 (PEAKKPEDWD…TIPNPEYKGP (65 aa)). Residues 266-304 (GEWTAPTIPNPEYKGPWKAKKIKNPNYKGKWKAPMIDNP) are 3 X approximate repeats. Residue Glu-324 coordinates an alpha-D-glucoside. A compositionally biased stretch (basic and acidic residues) spans 351–381 (EETWGKQKDAEKAAFEELEKKREEEETKDDP). Residues 351 to 416 (EETWGKQKDA…DKDDDQHDEL (66 aa)) are disordered. Acidic residues predominate over residues 382–400 (VESDAEDEDEAEADDSDKD). Residues 401–416 (DADKSDDKDDDQHDEL) show a composition bias toward basic and acidic residues. The Prevents secretion from ER motif lies at 413–416 (HDEL).

It belongs to the calreticulin family.

The protein localises to the endoplasmic reticulum lumen. Molecular calcium-binding chaperone promoting folding, oligomeric assembly and quality control in the ER via the calreticulin/calnexin cycle. This lectin may interact transiently with almost all of the monoglucosylated glycoproteins that are synthesized in the ER. This is Calreticulin from Beta vulgaris (Sugar beet).